A 308-amino-acid chain; its full sequence is HTH-type transcriptional activator AllS (308 aa).

The region spanning 2 to 59 is the HTH lysR-type domain; the sequence is FDPETLRTFISVAETGSFSKAAERLCKTTATTSYRIKLLEENTGVGLFFRTTRSVSLT. The segment at residues 19-38 is a DNA-binding region (H-T-H motif); that stretch reads FSKAAERLCKTTATTSYRIK.

Belongs to the LysR transcriptional regulatory family.

In terms of biological role, positive regulator essential for the expression of allD operon. Binds to the allD promoter. The sequence is that of HTH-type transcriptional activator AllS (allS) from Salmonella typhi.